The sequence spans 338 residues: UPF0324 membrane protein TauZ (338 aa).

Helical transmembrane passes span 12-31 (IEAA…TAQF), 36-55 (YGAP…NFLA), 75-92 (LGVA…LAAL), 96-118 (AIAL…SRLV), 125-147 (ALLT…AAVL), 162-184 (LSVT…FFGF), 191-213 (VFLG…IGPE), 223-245 (LIRV…ARGL), 258-280 (PGFV…PAAV), and 315-337 (AIAL…LHVL).

The protein belongs to the UPF0324 family.

It is found in the cell membrane. The chain is UPF0324 membrane protein TauZ (tauZ) from Paracoccus denitrificans.